We begin with the raw amino-acid sequence, 658 residues long: UvrABC system protein B (658 aa).

One can recognise a Helicase ATP-binding domain in the interval 25–178; sequence KSLKNKNHYQ…KSFLLKLVEM (154 aa). 38 to 45 is an ATP binding site; sequence GVTGSGKT. The Beta-hairpin motif lies at 91 to 114; that stretch reads HFDYYQPESYIPRRDLFIEKDSSI. A Helicase C-terminal domain is found at 433–607; sequence QVQDLFDEIK…ELKLRDDETK (175 aa). Positions 623–658 constitute a UVR domain; sequence EKIIKELDKKMRECAKNLDFEEAMHLRDEIAKLRTL.

The protein belongs to the UvrB family. Forms a heterotetramer with UvrA during the search for lesions. Interacts with UvrC in an incision complex.

The protein resides in the cytoplasm. The UvrABC repair system catalyzes the recognition and processing of DNA lesions. A damage recognition complex composed of 2 UvrA and 2 UvrB subunits scans DNA for abnormalities. Upon binding of the UvrA(2)B(2) complex to a putative damaged site, the DNA wraps around one UvrB monomer. DNA wrap is dependent on ATP binding by UvrB and probably causes local melting of the DNA helix, facilitating insertion of UvrB beta-hairpin between the DNA strands. Then UvrB probes one DNA strand for the presence of a lesion. If a lesion is found the UvrA subunits dissociate and the UvrB-DNA preincision complex is formed. This complex is subsequently bound by UvrC and the second UvrB is released. If no lesion is found, the DNA wraps around the other UvrB subunit that will check the other stand for damage. In Helicobacter acinonychis (strain Sheeba), this protein is UvrABC system protein B.